Reading from the N-terminus, the 1418-residue chain is Transcriptional regulator ADR1 (1418 aa).

Low complexity-rich tracts occupy residues 34 to 44 (TTTTANMSNTT) and 68 to 93 (TSMS…TTTS). Residues 34-96 (TTTTANMSNT…AATTTTSKKS (63 aa)) are disordered. 2 C2H2-type zinc fingers span residues 117–139 (FVCQ…ERSH) and 145–168 (FSCG…QKLH). Disordered regions lie at residues 181-285 (KSIK…LDQR), 403-426 (SQHG…RSES), 454-484 (VAAH…GLSR), 1132-1167 (NSNS…NNSN), and 1338-1362 (TNTN…NQHH). Over residues 189–211 (GDDDDDDDDDDEEMANSEDENDH) the composition is skewed to acidic residues. The segment covering 236–278 (NLFNSKQKPTKANTTKSKVAKLSTTTSRKNSTNPTRKNSSSLH) has biased composition (polar residues). Low complexity-rich tracts occupy residues 462–477 (QQQQ…QPNQ), 1145–1167 (NEIN…NNSN), and 1338–1356 (TNTN…DNGT).

It is found in the nucleus. Functionally, transcription factor involved in the regulation of hyphal growth. This chain is Transcriptional regulator ADR1 (ADR1), found in Candida albicans (strain SC5314 / ATCC MYA-2876) (Yeast).